The sequence spans 367 residues: Regulator of fusion ref-1 (367 aa).

Over residues 1-10 (MVLISTPPPA) the composition is skewed to pro residues. Residues 1–24 (MVLISTPPPAYAHNRKTSQEKKRR) form a disordered region. Residues 11–24 (YAHNRKTSQEKKRR) are basic motif 1. Positions 11 to 63 (YAHNRKTSQEKKRRDEINAKIKELQLLIQNESDNEKMTQGDVLNRAVEVVSRM) constitute a bHLH 1 domain. The tract at residues 25 to 63 (DEINAKIKELQLLIQNESDNEKMTQGDVLNRAVEVVSRM) is helix-loop-helix motif 1. 2 disordered regions span residues 133–177 (RSES…RRDR) and 313–367 (ATSP…RPWE). Positions 141 to 157 (SSMSYRSQSSSPSTSES) are enriched in low complexity. The span at 161 to 177 (IDRKEVKKNREQDRRDR) shows a compositional bias: basic and acidic residues. The basic motif 2 stretch occupies residues 162 to 175 (DRKEVKKNREQDRR). Positions 162 to 219 (DRKEVKKNREQDRRDRQGEAFDALKNFIIENKLMTSHQVEKMQRLNTLDIIIAYIQNK) constitute a bHLH 2 domain. Residues 176–219 (DRQGEAFDALKNFIIENKLMTSHQVEKMQRLNTLDIIIAYIQNK) form a helix-loop-helix motif 2 region. A compositionally biased stretch (low complexity) spans 313-354 (ATSPKSQQSPSYSLDSPPPSSDTSSSSIETPSTPNENSNSNP). The span at 356–367 (ASRKSKLFRPWE) shows a compositional bias: basic residues.

In terms of assembly, interacts with unc-37.

It is found in the nucleus. Probable transcription factor. Binds 5'-TGCCACGTGTCCA-3' in vitro, probably via the E-box motif 5'-CA[TC][AG]TG-3'. Acts in embryonic development in a Notch-dependent manner, perhaps as a direct target of transcriptional regulator lag-1 in the Notch signaling pathway. Also acts in embryonic development in a Notch-independent manner. Plays a role in both Notch-dependent and -independent pathways in the execution of neuronal lineage decisions in the embryo. Also involved in regulating cell fate leading to formation of neuronal structures known as postdeirids. Involved in the pattern of cell fusion with a large syncytium known as hyp-7, during larval development, in hermaphrodites. Plays a role in regulating the activity of homeobox protein mab-5 in Pn.p cells. This is Regulator of fusion ref-1 from Caenorhabditis elegans.